The following is a 431-amino-acid chain: MENKSNSQILFAEAQQYIPGGVNSPVRAFKSVGQEFPRFIKFAKGAYLYDVDWNKYIDYIGSWGPMILGHCDDDVLEAIQCQVKNGLSYGAPCKQEVDLAKKIIELMPNIEQVRFVNSGTEATMSAIRLARAYTCRNKIIKFEGCYHGHADEFLVAAGSGALSLGQPNSPGVPEDVVKDTLVASFNDMESIQALFEKYKDEIACIIVEPIAGNMNMIFPQDDFLAKLRAICDQNSSLLIFDEVMTGFRVALGGAQSIYNVKPDLTTLGKVIGGGMPVGAFGGRKEIMQKVSPAGPVYQAGTLSGNPIAMTAGIKTLEKISQPGLFDELGAKAQKLVDGLNEAAKAYDFNFHAKCLGGMFGLFFCSDKIAVNTFVDLGKTNLKMFNQFFAYMLDNGVYLAPSAYEAGFISIAHSDEDIEKTICLAKKFFQEN.

N6-(pyridoxal phosphate)lysine is present on Lys269.

It belongs to the class-III pyridoxal-phosphate-dependent aminotransferase family. HemL subfamily. As to quaternary structure, homodimer. It depends on pyridoxal 5'-phosphate as a cofactor.

It is found in the cytoplasm. The catalysed reaction is (S)-4-amino-5-oxopentanoate = 5-aminolevulinate. It participates in porphyrin-containing compound metabolism; protoporphyrin-IX biosynthesis; 5-aminolevulinate from L-glutamyl-tRNA(Glu): step 2/2. In Francisella tularensis subsp. tularensis (strain WY96-3418), this protein is Glutamate-1-semialdehyde 2,1-aminomutase.